A 359-amino-acid chain; its full sequence is 3-dehydroquinate synthase (359 aa).

Residues 71-76 (DGEAHK), 105-109 (GVIGD), 129-130 (TT), K142, K151, and 169-172 (TLHT) contribute to the NAD(+) site. 3 residues coordinate Zn(2+): E184, H247, and H264.

This sequence belongs to the sugar phosphate cyclases superfamily. Dehydroquinate synthase family. Co(2+) serves as cofactor. It depends on Zn(2+) as a cofactor. NAD(+) is required as a cofactor.

Its subcellular location is the cytoplasm. It catalyses the reaction 7-phospho-2-dehydro-3-deoxy-D-arabino-heptonate = 3-dehydroquinate + phosphate. Its pathway is metabolic intermediate biosynthesis; chorismate biosynthesis; chorismate from D-erythrose 4-phosphate and phosphoenolpyruvate: step 2/7. Its function is as follows. Catalyzes the conversion of 3-deoxy-D-arabino-heptulosonate 7-phosphate (DAHP) to dehydroquinate (DHQ). The protein is 3-dehydroquinate synthase of Neisseria meningitidis serogroup C (strain 053442).